A 232-amino-acid chain; its full sequence is Anti-sigma-K factor RskA (232 aa).

At 1 to 90 (MTEHTDFELL…EVRRQSRWRT (90 aa)) the chain is on the cytoplasmic side. The helical transmembrane segment at 91–111 (AAFASAAAIAVGLGAFGLGVL) threads the bilayer. The Extracellular segment spans residues 112–232 (TRPSPPPTVA…GTILAELPLG (121 aa)).

This sequence belongs to the anti-sigma-K factor family.

It localises to the cell membrane. In terms of biological role, an anti-sigma factor for extracytoplasmic function (ECF) sigma factor SigK. ECF sigma factors are held in an inactive form by an anti-sigma factor until released by regulated intramembrane proteolysis (RIP). RIP occurs when an extracytoplasmic signal triggers a concerted proteolytic cascade to transmit information and elicit cellular responses. The membrane-spanning regulatory substrate protein is first cut extracytoplasmically (site-1 protease, S1P), then within the membrane itself (site-2 protease, S2P, Rip1), while cytoplasmic proteases finish degrading the regulatory protein, liberating the sigma factor. The chain is Anti-sigma-K factor RskA (rskA) from Mycobacterium tuberculosis (strain ATCC 25177 / H37Ra).